We begin with the raw amino-acid sequence, 143 residues long: MKFFRGMIGFCIAGMIVMSVWTPLAENYGIFGGYLAAFIIIGPMWFMNHHVGLIENDEDAAFVDMAVGIGICGIMRDVFMRGGGELVSSLPTIGLVAIGAVLAGIVAAAIEKDMARKHEAKQEKTEPGMNIKEEERLNENQLV.

Helical transmembrane passes span 6 to 26 (GMIGFCIAGMIVMSVWTPLAE), 27 to 47 (NYGIFGGYLAAFIIIGPMWFM), 60 to 80 (AAFVDMAVGIGICGIMRDVFM), and 90 to 110 (LPTIGLVAIGAVLAGIVAAAI). Positions 118–143 (HEAKQEKTEPGMNIKEEERLNENQLV) are disordered.

The protein resides in the membrane. In terms of biological role, could be involved in the glycerol uptake either via facilitated diffusion or active transport. The chain is Putative glycerol transporter Lin0368 from Listeria innocua serovar 6a (strain ATCC BAA-680 / CLIP 11262).